The chain runs to 127 residues: Large ribosomal subunit protein bL12 (127 aa).

The protein belongs to the bacterial ribosomal protein bL12 family. In terms of assembly, homodimer. Part of the ribosomal stalk of the 50S ribosomal subunit. Forms a multimeric L10(L12)X complex, where L10 forms an elongated spine to which 2 to 4 L12 dimers bind in a sequential fashion. Binds GTP-bound translation factors.

In terms of biological role, forms part of the ribosomal stalk which helps the ribosome interact with GTP-bound translation factors. Is thus essential for accurate translation. The protein is Large ribosomal subunit protein bL12 of Streptomyces virginiae (Streptomyces cinnamonensis).